Consider the following 638-residue polypeptide: Fructose-1,6-bisphosphatase class 3 (638 aa).

This sequence belongs to the FBPase class 3 family. Mn(2+) is required as a cofactor.

It carries out the reaction beta-D-fructose 1,6-bisphosphate + H2O = beta-D-fructose 6-phosphate + phosphate. It functions in the pathway carbohydrate biosynthesis; gluconeogenesis. The polypeptide is Fructose-1,6-bisphosphatase class 3 (Pediococcus pentosaceus (strain ATCC 25745 / CCUG 21536 / LMG 10740 / 183-1w)).